The sequence spans 370 residues: Heme A synthase (370 aa).

Helical transmembrane passes span V15–A35, V104–P124, A129–A149, V161–L181, A200–L220, Q261–I280, G293–L313, and P317–L337. H264 contacts heme. Heme is bound at residue H324.

The protein belongs to the COX15/CtaA family. Type 2 subfamily. As to quaternary structure, interacts with CtaB. Heme b serves as cofactor.

It localises to the cell membrane. The enzyme catalyses Fe(II)-heme o + 2 A + H2O = Fe(II)-heme a + 2 AH2. The protein operates within porphyrin-containing compound metabolism; heme A biosynthesis; heme A from heme O: step 1/1. Its function is as follows. Catalyzes the conversion of heme O to heme A by two successive hydroxylations of the methyl group at C8. The first hydroxylation forms heme I, the second hydroxylation results in an unstable dihydroxymethyl group, which spontaneously dehydrates, resulting in the formyl group of heme A. This chain is Heme A synthase, found in Rhodopseudomonas palustris (strain TIE-1).